The primary structure comprises 160 residues: MRCPNCNSLDTQVKDSRPTEDSSVIRRRRVCIACNFRFTTFERVQLRELTVIKRNGRRVPFDRDKLVRSVQISLRKRPVEPERVEQLVSAIVRELESSGEADISSETIGEIVMDHLRKLDDVAYVRFASVYRNFREAKDFEAVLGELSGEEEARPTLVRK.

The span at 1 to 11 (MRCPNCNSLDT) shows a compositional bias: polar residues. The disordered stretch occupies residues 1–20 (MRCPNCNSLDTQVKDSRPTE). Residues 3-34 (CPNCNSLDTQVKDSRPTEDSSVIRRRRVCIAC) fold into a zinc finger. Residues 49–139 (LTVIKRNGRR…VYRNFREAKD (91 aa)) form the ATP-cone domain.

It belongs to the NrdR family. Zn(2+) serves as cofactor.

Its function is as follows. Negatively regulates transcription of bacterial ribonucleotide reductase nrd genes and operons by binding to NrdR-boxes. This chain is Transcriptional repressor NrdR, found in Rhodopseudomonas palustris (strain BisB5).